We begin with the raw amino-acid sequence, 66 residues long: MAMVKIKDGESFESAFRKFKKSCEKAGILSEVKKRENFEKPSVRLKKKSIAARKRAVKKSRKGWND.

This sequence belongs to the bacterial ribosomal protein bS21 family.

The protein is Small ribosomal subunit protein bS21 of Bdellovibrio bacteriovorus (strain ATCC 15356 / DSM 50701 / NCIMB 9529 / HD100).